The primary structure comprises 616 residues: Telomeric repeat-binding factor 2-interacting protein 1 (616 aa).

The region spanning 15–98 (FLDPGGQSMR…QQLDPNDYAI (84 aa)) is the BRCT domain. The 58-residue stretch at 112 to 169 (NQGSGRLGYSSEEDAAILKFIEKRQQDAKGNLVWKEMEKRHVTEHSWQSMKDRFLKHL) folds into the Myb-like domain. Residues 174–518 (ADKPTKKSPI…CSHIRETPEE (345 aa)) are disordered. The span at 232-245 (PERASSPPEEPQAA) shows a compositional bias: low complexity. Positions 246 to 255 (GQPSQASSND) are enriched in polar residues. Composition is skewed to basic and acidic residues over residues 271-288 (ENPRLDEDAPDASNEHSS) and 344-358 (RSSRLEENPDRRDIP). Polar residues-rich tracts occupy residues 363–382 (EQSSPNKSQMTSKISTSDSG) and 397–415 (NANSSPSKTRQTNSEASTP). The span at 431-444 (EDSDVMDDSEECEN) shows a compositional bias: acidic residues. A compositionally biased stretch (basic and acidic residues) spans 468-480 (REPESQAEHHEET). The short motif at 597–613 (SKFGEEEVTRRKSFLAT) is the Nuclear localization signal element.

It belongs to the RAP1 family. Homodimer. Component of the shelterin complex (telosome). Interacts with terf2; the interaction is direct.

It localises to the nucleus. It is found in the chromosome. The protein localises to the telomere. Acts both as a regulator of telomere function and as a transcription regulator. Involved in the regulation of telomere length and protection as a component of the shelterin complex (telosome). Does not bind DNA directly: recruited to telomeric double-stranded 5'-TTAGGG-3' repeats via its interaction with terf2. Independently of its function in telomeres, also acts as a transcription regulator: recruited to extratelomeric 5'-TTAGGG-3' sites via its association with terf2 or other factors, and regulates gene expression. This chain is Telomeric repeat-binding factor 2-interacting protein 1 (terf2ip), found in Danio rerio (Zebrafish).